Consider the following 158-residue polypeptide: E3 ubiquitin ligase complex SCF subunit sconC (158 aa).

Positions 100–158 are interaction with the F-box domain of F-box proteins; that stretch reads ILAANYLDIKALLDVGCKTVANMIKGKSPEEIRKTFNIQNDFTPEEEDQIRRENEWAEE.

This sequence belongs to the SKP1 family. In terms of assembly, component of the SCF (SKP1-CUL1-F-box protein) E3 ubiquitin ligase complexes.

It participates in protein modification; protein ubiquitination. Essential component of the SCF (SKP1-CUL1-F-box protein) E3 ubiquitin ligase complexes, which mediate the ubiquitination and subsequent proteasomal degradation of target proteins. Controls sulfur metabolite repression, probably by mediating the inactivation or degradation of the metR transcription factor. This chain is E3 ubiquitin ligase complex SCF subunit sconC (sconC), found in Aspergillus fumigatus (strain CBS 144.89 / FGSC A1163 / CEA10) (Neosartorya fumigata).